The sequence spans 201 residues: Small ribosomal subunit protein uS4c (201 aa).

In terms of domain architecture, S4 RNA-binding spans 89-150 (MRLDNILFRL…KERSKALIQN (62 aa)).

The protein belongs to the universal ribosomal protein uS4 family. Part of the 30S ribosomal subunit. Contacts protein S5. The interaction surface between S4 and S5 is involved in control of translational fidelity.

The protein localises to the plastid. It is found in the chloroplast. One of the primary rRNA binding proteins, it binds directly to 16S rRNA where it nucleates assembly of the body of the 30S subunit. In terms of biological role, with S5 and S12 plays an important role in translational accuracy. The sequence is that of Small ribosomal subunit protein uS4c (rps4) from Phalaenopsis aphrodite subsp. formosana (Moth orchid).